The sequence spans 239 residues: Purine nucleoside phosphorylase DeoD-type (239 aa).

H5 is a binding site for a purine D-ribonucleoside. Residues G21, R25, R44, and 88 to 91 (RVGS) contribute to the phosphate site. A purine D-ribonucleoside is bound by residues 180-182 (EME) and 204-205 (SD). Residue D205 is the Proton donor of the active site.

Belongs to the PNP/UDP phosphorylase family. As to quaternary structure, homohexamer; trimer of homodimers.

It carries out the reaction a purine D-ribonucleoside + phosphate = a purine nucleobase + alpha-D-ribose 1-phosphate. The enzyme catalyses a purine 2'-deoxy-D-ribonucleoside + phosphate = a purine nucleobase + 2-deoxy-alpha-D-ribose 1-phosphate. In terms of biological role, catalyzes the reversible phosphorolytic breakdown of the N-glycosidic bond in the beta-(deoxy)ribonucleoside molecules, with the formation of the corresponding free purine bases and pentose-1-phosphate. The polypeptide is Purine nucleoside phosphorylase DeoD-type (Citrobacter koseri (strain ATCC BAA-895 / CDC 4225-83 / SGSC4696)).